The following is a 637-amino-acid chain: Chaperone protein HtpG (637 aa).

Residues 1–338 are a; substrate-binding; the sequence is MTSTIDKNGA…SADLPLNISR (338 aa). Residues 339–552 form a b region; the sequence is EMIQESPILA…ESGPDRQLEK (214 aa). A c region spans residues 553–637; sequence ILLGVGQLAG…LRRSSAGGGD (85 aa).

It belongs to the heat shock protein 90 family. Homodimer.

The protein resides in the cytoplasm. Its function is as follows. Molecular chaperone. Has ATPase activity. The sequence is that of Chaperone protein HtpG from Nitrobacter winogradskyi (strain ATCC 25391 / DSM 10237 / CIP 104748 / NCIMB 11846 / Nb-255).